A 294-amino-acid polypeptide reads, in one-letter code: Bifunctional protein FolD (294 aa).

Residues 166-168 (GRS), S195, and I236 contribute to the NADP(+) site.

The protein belongs to the tetrahydrofolate dehydrogenase/cyclohydrolase family. In terms of assembly, homodimer.

The catalysed reaction is (6R)-5,10-methylene-5,6,7,8-tetrahydrofolate + NADP(+) = (6R)-5,10-methenyltetrahydrofolate + NADPH. It carries out the reaction (6R)-5,10-methenyltetrahydrofolate + H2O = (6R)-10-formyltetrahydrofolate + H(+). Its pathway is one-carbon metabolism; tetrahydrofolate interconversion. Its function is as follows. Catalyzes the oxidation of 5,10-methylenetetrahydrofolate to 5,10-methenyltetrahydrofolate and then the hydrolysis of 5,10-methenyltetrahydrofolate to 10-formyltetrahydrofolate. This chain is Bifunctional protein FolD, found in Chloroherpeton thalassium (strain ATCC 35110 / GB-78).